We begin with the raw amino-acid sequence, 80 residues long: Cell division activator CedA (80 aa).

This sequence belongs to the CedA family.

Activates the cell division inhibited by chromosomal DNA over-replication. The sequence is that of Cell division activator CedA from Salmonella typhimurium (strain LT2 / SGSC1412 / ATCC 700720).